The chain runs to 25 residues: Endoglucanase 1 (25 aa).

The interval 1-25 is disordered; the sequence is YDASLKPNLQIPQKNIPNNDAVNIK. Positions 10–25 are enriched in polar residues; the sequence is QIPQKNIPNNDAVNIK.

It catalyses the reaction Endohydrolysis of (1-&gt;4)-beta-D-glucosidic linkages in cellulose, lichenin and cereal beta-D-glucans.. Functionally, this enzyme hydrolyzes cellotetraose, cellopentaose, and cellohexaose to cellobiose and cellotriose but does not hydrolyze cellobiose or cellotriose. The protein is Endoglucanase 1 of Ruminiclostridium josui (Clostridium josui).